The chain runs to 89 residues: Small ribosomal subunit protein bS20 (89 aa).

This sequence belongs to the bacterial ribosomal protein bS20 family.

Its function is as follows. Binds directly to 16S ribosomal RNA. This Helicobacter pylori (strain P12) protein is Small ribosomal subunit protein bS20.